Consider the following 191-residue polypeptide: Flavin reductase (NADH) (191 aa).

46–52 lines the FAD pocket; the sequence is YGLTCSA. Ser55 contacts NAD(+). An FAD-binding site is contributed by 72–73; it reads RV. NAD(+) contacts are provided by residues His144 and 166 to 169; that span reads YWRR.

It belongs to the non-flavoprotein flavin reductase family.

It catalyses the reaction a reduced flavin + NAD(+) = an oxidized flavin + NADH + 2 H(+). Functionally, catalyzes the reduction of flavin by NADH. Subsequently, the reduced flavins is transferred to the tetracycline 7-halogenase CtcP. The polypeptide is Flavin reductase (NADH) (Kitasatospora aureofaciens (Streptomyces aureofaciens)).